Consider the following 528-residue polypeptide: U6 snRNA (guanine-N(2))-methyltransferase THUMPD2 (528 aa).

Basic and acidic residues predominate over residues 154 to 168 (QEVAKDHGESQEDKL). Disordered regions lie at residues 154-200 (QEVA…ADAQ) and 437-460 (MKTL…RASS). A THUMP domain is found at 162-266 (ESQEDKLLQG…DAYSVVGIPL (105 aa)).

This sequence belongs to the methyltransferase superfamily. In terms of assembly, part of the heterodimeric THUMPD2-TRM112 methyltransferase complex; this complex forms an active tRNA methyltransferase, where TRMT112 acts as an activator of the catalytic subunit THUMPD2.

It is found in the nucleus. It catalyses the reaction guanosine in U6 snRNA + S-adenosyl-L-methionine = N(2)-methylguanosine in U6 snRNA + S-adenosyl-L-homocysteine + H(+). Its function is as follows. Catalytic subunit of the THUMPD2-TRM112 methyltransferase complex, that specifically mediates the S-adenosyl-L-methionine-dependent N(2)-methylation of guanosine nucleotides, most probably at position 72 (m2G72), in the U6snRNA of the major spliceosome. This modification in the U6 snRNA affects the constitutive splicing efficiency of introns that have suboptimal splice sites and can impact final mRNA levels. The polypeptide is U6 snRNA (guanine-N(2))-methyltransferase THUMPD2 (Mus musculus (Mouse)).